Reading from the N-terminus, the 511-residue chain is Cobyric acid synthase (511 aa).

The GATase cobBQ-type domain maps to 251 to 443; sequence LLDIAIICLP…IHGIFDNDIF (193 aa). The active-site Nucleophile is C332. Residue H435 is part of the active site.

The protein belongs to the CobB/CobQ family. CobQ subfamily.

It participates in cofactor biosynthesis; adenosylcobalamin biosynthesis. Functionally, catalyzes amidations at positions B, D, E, and G on adenosylcobyrinic A,C-diamide. NH(2) groups are provided by glutamine, and one molecule of ATP is hydrogenolyzed for each amidation. This Listeria welshimeri serovar 6b (strain ATCC 35897 / DSM 20650 / CCUG 15529 / CIP 8149 / NCTC 11857 / SLCC 5334 / V8) protein is Cobyric acid synthase.